Here is a 236-residue protein sequence, read N- to C-terminus: F-box and leucine-rich protein 22 (236 aa).

The F-box domain maps to Met-1–Leu-46. LRR repeat units follow at residues Phe-15 to Pro-40, Trp-43 to Trp-72, His-98 to Gly-123, Cys-124 to Asn-149, Cys-150 to Phe-175, and Cys-176 to Ser-201.

In terms of assembly, directly interacts with SKP1 and CUL1. As to expression, enriched in cardiac muscle (at protein level).

Its subcellular location is the cytoplasm. The protein localises to the myofibril. The protein resides in the sarcomere. It is found in the z line. Its pathway is protein modification; protein ubiquitination. Its function is as follows. Substrate-recognition component of the SCF (SKP1-CUL1-F-box protein)-type E3 ubiquitin ligase complex. Promotes ubiquitination of sarcomeric proteins alpha-actinin-2 (ACTN2) and filamin-C (FLNC). The polypeptide is F-box and leucine-rich protein 22 (Fbxl22) (Mus musculus (Mouse)).